The primary structure comprises 101 residues: A-type ATP synthase subunit F (101 aa).

This sequence belongs to the V-ATPase F subunit family. As to quaternary structure, has multiple subunits, A(3), B(3), C, D, E, F, G, I and K(x); there may be a few other subunits as well.

The protein localises to the cell membrane. Component of the A-type ATP synthase that produces ATP from ADP in the presence of a proton gradient across the membrane. This Methanosarcina mazei (strain ATCC BAA-159 / DSM 3647 / Goe1 / Go1 / JCM 11833 / OCM 88) (Methanosarcina frisia) protein is A-type ATP synthase subunit F.